The sequence spans 335 residues: Holliday junction branch migration complex subunit RuvB (335 aa).

A large ATPase domain (RuvB-L) region spans residues Met1 to Tyr181. ATP-binding positions include Leu20, Arg21, Gly62, Lys65, Thr66, Thr67, Glu128–Tyr130, Arg171, Tyr181, and Arg218. Thr66 lines the Mg(2+) pocket. A small ATPAse domain (RuvB-S) region spans residues Lys182 to Gly252. Residues Glu255 to Glu335 form a head domain (RuvB-H) region. Residues Arg309 and Arg314 each contribute to the DNA site.

It belongs to the RuvB family. In terms of assembly, homohexamer. Forms an RuvA(8)-RuvB(12)-Holliday junction (HJ) complex. HJ DNA is sandwiched between 2 RuvA tetramers; dsDNA enters through RuvA and exits via RuvB. An RuvB hexamer assembles on each DNA strand where it exits the tetramer. Each RuvB hexamer is contacted by two RuvA subunits (via domain III) on 2 adjacent RuvB subunits; this complex drives branch migration. In the full resolvosome a probable DNA-RuvA(4)-RuvB(12)-RuvC(2) complex forms which resolves the HJ.

The protein resides in the cytoplasm. The enzyme catalyses ATP + H2O = ADP + phosphate + H(+). Functionally, the RuvA-RuvB-RuvC complex processes Holliday junction (HJ) DNA during genetic recombination and DNA repair, while the RuvA-RuvB complex plays an important role in the rescue of blocked DNA replication forks via replication fork reversal (RFR). RuvA specifically binds to HJ cruciform DNA, conferring on it an open structure. The RuvB hexamer acts as an ATP-dependent pump, pulling dsDNA into and through the RuvAB complex. RuvB forms 2 homohexamers on either side of HJ DNA bound by 1 or 2 RuvA tetramers; 4 subunits per hexamer contact DNA at a time. Coordinated motions by a converter formed by DNA-disengaged RuvB subunits stimulates ATP hydrolysis and nucleotide exchange. Immobilization of the converter enables RuvB to convert the ATP-contained energy into a lever motion, pulling 2 nucleotides of DNA out of the RuvA tetramer per ATP hydrolyzed, thus driving DNA branch migration. The RuvB motors rotate together with the DNA substrate, which together with the progressing nucleotide cycle form the mechanistic basis for DNA recombination by continuous HJ branch migration. Branch migration allows RuvC to scan DNA until it finds its consensus sequence, where it cleaves and resolves cruciform DNA. This is Holliday junction branch migration complex subunit RuvB from Campylobacter jejuni (strain RM1221).